We begin with the raw amino-acid sequence, 249 residues long: Electron transfer flavoprotein subunit beta (249 aa).

It belongs to the ETF beta-subunit/FixA family. As to quaternary structure, heterodimer of an alpha and a beta subunit. FAD is required as a cofactor. It depends on AMP as a cofactor.

Functionally, the electron transfer flavoprotein serves as a specific electron acceptor for other dehydrogenases. It transfers the electrons to the main respiratory chain via ETF-ubiquinone oxidoreductase (ETF dehydrogenase). This Pseudomonas aeruginosa (strain ATCC 15692 / DSM 22644 / CIP 104116 / JCM 14847 / LMG 12228 / 1C / PRS 101 / PAO1) protein is Electron transfer flavoprotein subunit beta (etfB).